Reading from the N-terminus, the 151-residue chain is Large ribosomal subunit protein uL22 (151 aa).

It belongs to the universal ribosomal protein uL22 family. As to quaternary structure, part of the 50S ribosomal subunit.

This protein binds specifically to 23S rRNA. It makes multiple contacts with different domains of the 23S rRNA in the assembled 50S subunit and ribosome. Its function is as follows. The globular domain of the protein is located near the polypeptide exit tunnel on the outside of the subunit, while an extended beta-hairpin is found that lines the wall of the exit tunnel in the center of the 70S ribosome. This is Large ribosomal subunit protein uL22 from Thermoplasma acidophilum (strain ATCC 25905 / DSM 1728 / JCM 9062 / NBRC 15155 / AMRC-C165).